A 358-amino-acid polypeptide reads, in one-letter code: U5 small nuclear ribonucleoprotein 40 kDa protein (358 aa).

Lys-18 is covalently cross-linked (Glycyl lysine isopeptide (Lys-Gly) (interchain with G-Cter in SUMO2)). Residue Arg-21 is modified to Asymmetric dimethylarginine. WD repeat units lie at residues 65–104 (GHEG…DNYA), 108–147 (GHSG…RVKR), 150–190 (GHTS…AVQT), 192–231 (QNTY…LTYT), 234–273 (GHAD…PKER), 284–323 (NFEK…VLYK), and 326–358 (GHAG…GEIQ). A Glycyl lysine isopeptide (Lys-Gly) (interchain with G-Cter in SUMO2) cross-link involves residue Lys-271.

As to quaternary structure, component of the pre-catalytic and catalytic spliceosome complexes. Component of the postcatalytic spliceosome P complex. Part of the U5 snRNP complex. Interacts with PRPF8. Component of the U4/U6-U5 tri-snRNP complex composed of the U4, U6 and U5 snRNAs and at least PRPF3, PRPF4, PRPF6, PRPF8, PRPF31, SNRNP200, TXNL4A, WDR57, SNRNP40, DDX23, CD2BP2, PPIH, SNU13, EFTUD2, SART1 and USP39. Component of the minor spliceosome, which splices U12-type introns.

The protein resides in the nucleus. Functionally, required for pre-mRNA splicing as component of the activated spliceosome. Component of the U5 small nuclear ribonucleoprotein (snRNP) complex and the U4/U6-U5 tri-snRNP complex, building blocks of the spliceosome. As a component of the minor spliceosome, involved in the splicing of U12-type introns in pre-mRNAs. This Mus musculus (Mouse) protein is U5 small nuclear ribonucleoprotein 40 kDa protein (Snrnp40).